Reading from the N-terminus, the 213-residue chain is Large ribosomal subunit protein uL3 (213 aa).

The protein belongs to the universal ribosomal protein uL3 family. Part of the 50S ribosomal subunit. Forms a cluster with proteins L14 and L19.

Functionally, one of the primary rRNA binding proteins, it binds directly near the 3'-end of the 23S rRNA, where it nucleates assembly of the 50S subunit. This Bifidobacterium adolescentis (strain ATCC 15703 / DSM 20083 / NCTC 11814 / E194a) protein is Large ribosomal subunit protein uL3.